A 152-amino-acid polypeptide reads, in one-letter code: Nucleoside diphosphate kinase (152 aa).

Lys-10, Phe-58, Arg-86, Thr-92, Arg-103, and Asn-113 together coordinate ATP. His-116 (pros-phosphohistidine intermediate) is an active-site residue.

It belongs to the NDK family. It depends on Mg(2+) as a cofactor.

It localises to the cytoplasm. It carries out the reaction a 2'-deoxyribonucleoside 5'-diphosphate + ATP = a 2'-deoxyribonucleoside 5'-triphosphate + ADP. The catalysed reaction is a ribonucleoside 5'-diphosphate + ATP = a ribonucleoside 5'-triphosphate + ADP. Major role in the synthesis of nucleoside triphosphates other than ATP. The ATP gamma phosphate is transferred to the NDP beta phosphate via a ping-pong mechanism, using a phosphorylated active-site intermediate. This is Nucleoside diphosphate kinase from Methanosphaera stadtmanae (strain ATCC 43021 / DSM 3091 / JCM 11832 / MCB-3).